We begin with the raw amino-acid sequence, 379 residues long: Eukaryotic translation initiation factor 3 subunit H (379 aa).

The MPN domain maps to 17-170 (VQIDSLVVMK…IRAYRLSTKA (154 aa)). A compositionally biased stretch (basic and acidic residues) spans 280–291 (RQAENEQREARG). Residues 280 to 300 (RQAENEQREARGEPPLSFDDI) form a disordered region.

Belongs to the eIF-3 subunit H family. As to quaternary structure, component of the eukaryotic translation initiation factor 3 (eIF-3) complex.

The protein localises to the cytoplasm. In terms of biological role, component of the eukaryotic translation initiation factor 3 (eIF-3) complex, which is involved in protein synthesis of a specialized repertoire of mRNAs and, together with other initiation factors, stimulates binding of mRNA and methionyl-tRNAi to the 40S ribosome. The eIF-3 complex specifically targets and initiates translation of a subset of mRNAs involved in cell proliferation. The sequence is that of Eukaryotic translation initiation factor 3 subunit H from Brugia malayi (Filarial nematode worm).